Consider the following 105-residue polypeptide: uncharacterized protein (105 aa).

This is an uncharacterized protein from Archaeoglobus fulgidus (strain ATCC 49558 / DSM 4304 / JCM 9628 / NBRC 100126 / VC-16).